Consider the following 504-residue polypeptide: L-amino-acid oxidase (504 aa).

Residues Met1 to Cys18 form the signal peptide. A disulfide bond links Cys28 and Cys191. FAD-binding positions include Met61 to Ser62, Glu81 to Ala82, Arg89, and Gly105 to Arg108. Position 108 (Arg108) interacts with substrate. An N-linked (GlcNAc...) asparagine glycan is attached at Asn190. His241 is a substrate binding site. Residue Val279 participates in FAD binding. Cysteines 349 and 430 form a disulfide. A glycan (N-linked (GlcNAc...) asparagine) is linked at Asn379. Tyr390 is a substrate binding site. FAD contacts are provided by residues Glu475 and Gly482–Thr487. Gly482 to Trp483 provides a ligand contact to substrate.

This sequence belongs to the flavin monoamine oxidase family. FIG1 subfamily. In terms of assembly, homodimer; non-covalently linked. FAD is required as a cofactor. As to expression, expressed by the venom gland.

The protein localises to the secreted. The catalysed reaction is an L-alpha-amino acid + O2 + H2O = a 2-oxocarboxylate + H2O2 + NH4(+). The enzyme catalyses L-leucine + O2 + H2O = 4-methyl-2-oxopentanoate + H2O2 + NH4(+). Its function is as follows. Catalyzes an oxidative deamination of predominantly hydrophobic and aromatic L-amino acids, thus producing hydrogen peroxide that may contribute to the diverse toxic effects of this enzyme. Shows activity on L-Leu. Exhibits diverse biological activities, such as apoptosis, and inhibition of agonist- and shear stress-induced platelet aggregation (SIPA). Effects of snake L-amino oxidases on platelets are controversial, since they either induce aggregation or inhibit agonist-induced aggregation. These different effects are probably due to different experimental conditions. This protein may also induce hemorrhage, hemolysis, edema, antibacterial and antiparasitic activities. In Gloydius blomhoffii (Mamushi), this protein is L-amino-acid oxidase.